A 575-amino-acid chain; its full sequence is uncharacterized protein (575 aa).

A disordered region spans residues 507 to 536 (AHRKVGELNNKKPMTGEKPPPKNKKSPKYK).

This is an uncharacterized protein from Ostreid herpesvirus 1 (isolate France) (OsHV-1).